We begin with the raw amino-acid sequence, 440 residues long: Chitinase-like protein Idgf5 (440 aa).

Residues 1 to 27 (MRNKMIYFNFHLFVIIFANLQIFQVQA) form the signal peptide. Residues 28-439 (ANIFCYYDTQ…KSIHNAFKKF (412 aa)) form the GH18 domain. Residues Cys-32 and Cys-56 are joined by a disulfide bond. 3 N-linked (GlcNAc...) asparagine glycosylation sites follow: Asn-126, Asn-283, and Asn-403. An intrachain disulfide couples Cys-340 to Cys-421.

The protein belongs to the glycosyl hydrolase 18 family. IDGF subfamily. Glycosylated.

The protein resides in the secreted. Cooperates with insulin-like peptides to stimulate the proliferation, polarization and motility of imaginal disk cells. May act by stabilizing the binding of insulin-like peptides to its receptor through a simultaneous interaction with both molecules to form a multiprotein signaling complex. This chain is Chitinase-like protein Idgf5 (Idgf5), found in Glossina morsitans morsitans (Savannah tsetse fly).